The chain runs to 91 residues: Cell division topological specificity factor (91 aa).

Belongs to the MinE family.

Functionally, prevents the cell division inhibition by proteins MinC and MinD at internal division sites while permitting inhibition at polar sites. This ensures cell division at the proper site by restricting the formation of a division septum at the midpoint of the long axis of the cell. The chain is Cell division topological specificity factor from Caldanaerobacter subterraneus subsp. tengcongensis (strain DSM 15242 / JCM 11007 / NBRC 100824 / MB4) (Thermoanaerobacter tengcongensis).